Reading from the N-terminus, the 27-residue chain is Cruzioseptin-14 (27 aa).

Expressed by the skin glands.

It is found in the secreted. Its function is as follows. Has antimicrobial activity. This is Cruzioseptin-14 from Cruziohyla calcarifer (Splendid leaf frog).